The sequence spans 201 residues: MTDSTNNQGTSGRPDDDHTTEEVASVFNDPGAQAPAGEPDPFVVLENLQLENAGLKDKVLRTYADMENLRRRSEKEVADAKLYGVTSFARDMLTFADNLHRAIESLPAEAKQAVDGPLKTFVEGIELTERDFLSRLAKYGVKKIEPLGNKFDPNLHEALFEIPDESVVSGTVKQVVEDGYVIGERVLRPAKVGVSRGGPKA.

Residues 1–11 (MTDSTNNQGTS) show a composition bias toward polar residues. The disordered stretch occupies residues 1–40 (MTDSTNNQGTSGRPDDDHTTEEVASVFNDPGAQAPAGEPD).

It belongs to the GrpE family. As to quaternary structure, homodimer.

The protein localises to the cytoplasm. In terms of biological role, participates actively in the response to hyperosmotic and heat shock by preventing the aggregation of stress-denatured proteins, in association with DnaK and GrpE. It is the nucleotide exchange factor for DnaK and may function as a thermosensor. Unfolded proteins bind initially to DnaJ; upon interaction with the DnaJ-bound protein, DnaK hydrolyzes its bound ATP, resulting in the formation of a stable complex. GrpE releases ADP from DnaK; ATP binding to DnaK triggers the release of the substrate protein, thus completing the reaction cycle. Several rounds of ATP-dependent interactions between DnaJ, DnaK and GrpE are required for fully efficient folding. This chain is Protein GrpE, found in Beijerinckia indica subsp. indica (strain ATCC 9039 / DSM 1715 / NCIMB 8712).